The primary structure comprises 131 residues: MLGSLSWEHMLVLVVVGLVVLGPERLPGAIRWTSNALRQARDYLSGVTTQLREDLGPEFDDLRVPLSELQKLRGMTPRAALTKHLLDGDDSFLTGAFDRPVNGAAAQPPPAPAPPPEPHRSGQTPFDADAT.

Residues 2-22 (LGSLSWEHMLVLVVVGLVVLG) traverse the membrane as a helical segment. The segment at 96 to 131 (AFDRPVNGAAAQPPPAPAPPPEPHRSGQTPFDADAT) is disordered. Over residues 107 to 116 (QPPPAPAPPP) the composition is skewed to pro residues.

The protein belongs to the TatB family. As to quaternary structure, the Tat system comprises two distinct complexes: a TatABC complex, containing multiple copies of TatA, TatB and TatC subunits, and a separate TatA complex, containing only TatA subunits. Substrates initially bind to the TatABC complex, which probably triggers association of the separate TatA complex to form the active translocon.

The protein resides in the cell membrane. In terms of biological role, part of the twin-arginine translocation (Tat) system that transports large folded proteins containing a characteristic twin-arginine motif in their signal peptide across membranes. Together with TatC, TatB is part of a receptor directly interacting with Tat signal peptides. TatB may form an oligomeric binding site that transiently accommodates folded Tat precursor proteins before their translocation. In Mycolicibacterium paratuberculosis (strain ATCC BAA-968 / K-10) (Mycobacterium paratuberculosis), this protein is Sec-independent protein translocase protein TatB.